A 188-amino-acid chain; its full sequence is MVKIAIFASGSGSNFENIVEHVESGKLENIEVTALYTDHQNAFCIDRAKKHDIPVYINEPKQFGSKAAYEQHLVTLLNEDKVEWIILAGYMRLIGPDLLASFEGKILNIHPSLLPKYKGIDAIGQAYHSGDTITGSTVHYVDSGMDTGEIIEQRQCDIRPDDSKEQLEEKVKKLEYELYPSVIAKIVK.

A N(1)-(5-phospho-beta-D-ribosyl)glycinamide-binding site is contributed by 12–14 (GSN). (6R)-10-formyltetrahydrofolate contacts are provided by residues K66, 91-94 (MRLI), and N108. H110 acts as the Proton donor in catalysis.

This sequence belongs to the GART family.

The enzyme catalyses N(1)-(5-phospho-beta-D-ribosyl)glycinamide + (6R)-10-formyltetrahydrofolate = N(2)-formyl-N(1)-(5-phospho-beta-D-ribosyl)glycinamide + (6S)-5,6,7,8-tetrahydrofolate + H(+). It functions in the pathway purine metabolism; IMP biosynthesis via de novo pathway; N(2)-formyl-N(1)-(5-phospho-D-ribosyl)glycinamide from N(1)-(5-phospho-D-ribosyl)glycinamide (10-formyl THF route): step 1/1. Catalyzes the transfer of a formyl group from 10-formyltetrahydrofolate to 5-phospho-ribosyl-glycinamide (GAR), producing 5-phospho-ribosyl-N-formylglycinamide (FGAR) and tetrahydrofolate. The protein is Phosphoribosylglycinamide formyltransferase of Staphylococcus aureus (strain MRSA252).